A 174-amino-acid polypeptide reads, in one-letter code: Methylated-DNA--protein-cysteine methyltransferase (174 aa).

The active-site Nucleophile; methyl group acceptor is the Cys-144.

Belongs to the MGMT family.

The protein localises to the cytoplasm. The catalysed reaction is a 6-O-methyl-2'-deoxyguanosine in DNA + L-cysteinyl-[protein] = S-methyl-L-cysteinyl-[protein] + a 2'-deoxyguanosine in DNA. The enzyme catalyses a 4-O-methyl-thymidine in DNA + L-cysteinyl-[protein] = a thymidine in DNA + S-methyl-L-cysteinyl-[protein]. Involved in the cellular defense against the biological effects of O6-methylguanine (O6-MeG) and O4-methylthymine (O4-MeT) in DNA. Repairs the methylated nucleobase in DNA by stoichiometrically transferring the methyl group to a cysteine residue in the enzyme. This is a suicide reaction: the enzyme is irreversibly inactivated. The chain is Methylated-DNA--protein-cysteine methyltransferase from Pyrococcus furiosus (strain ATCC 43587 / DSM 3638 / JCM 8422 / Vc1).